Reading from the N-terminus, the 409-residue chain is uncharacterized protein (409 aa).

This is an uncharacterized protein from Mycoplasma genitalium (strain ATCC 33530 / DSM 19775 / NCTC 10195 / G37) (Mycoplasmoides genitalium).